The sequence spans 596 residues: Chaperone protein DnaK (596 aa).

Thr180 is modified (phosphothreonine; by autocatalysis).

This sequence belongs to the heat shock protein 70 family.

Its function is as follows. Acts as a chaperone. This chain is Chaperone protein DnaK, found in Thermosipho melanesiensis (strain DSM 12029 / CIP 104789 / BI429).